We begin with the raw amino-acid sequence, 239 residues long: Phospholipase A2 (239 aa).

The signal sequence occupies residues 1–19 (MSLIIVLVISVLSADAVLS). Residues 20–105 (MDNELYLNLE…GRCLSVGESE (86 aa)) constitute a propeptide that is removed on maturation. Ca(2+) contacts are provided by Trp-113, Gly-115, and Gly-117. Disulfide bonds link Cys-114/Cys-136, Cys-135/Cys-174, Cys-142/Cys-167, Cys-165/Cys-202, and Cys-207/Cys-217. His-139 is an active-site residue. Asp-140 contributes to the Ca(2+) binding site. Residues 211–213 (RSP) constitute a propeptide that is removed on maturation.

It belongs to the phospholipase A2 family. Group III subfamily. In terms of assembly, heterodimer composed of a small subunit and a large subunit; disulfid-linked. Ca(2+) is required as a cofactor. As to expression, expressed by the venom gland.

It localises to the secreted. It catalyses the reaction a 1,2-diacyl-sn-glycero-3-phosphocholine + H2O = a 1-acyl-sn-glycero-3-phosphocholine + a fatty acid + H(+). Toxic phospholipase A2, which may catalyze the calcium-dependent hydrolysis of the 2-acyl groups in 3-sn-phosphoglycerides. Inhibits both skeletal (RYR1) and cardiac (RYR2) ryanodine receptors (calcium release channels). Probably blocks ryanodine receptors by generating a lipid product. The protein is Phospholipase A2 of Hoffmannihadrurus gertschi (Scorpion).